The following is a 952-amino-acid chain: Inactive atromentin synthetase invA6 (952 aa).

The segment at 58 to 462 (DSSVQTRSFS…NGRIKDTVIV (405 aa)) is adenylation (A) domain. The region spanning 594-672 (APSTETEKTL…SLAKYVDSLV (79 aa)) is the Carrier domain. Residues 599–669 (TEKTLGRLYA…VISSLAKYVD (71 aa)) form a thiolation and peptide carrier (T) domain region. S631 bears the O-(pantetheine 4'-phosphoryl)serine mark. The thioesterase (TE) domain stretch occupies residues 695-939 (PIFMVHPGIG…LMDFDHVSGF (245 aa)).

This sequence belongs to the ATP-dependent AMP-binding enzyme family.

In terms of biological role, inactive atromentin synthetase homolog. Does not accept 4-hydroxyphenylpyruvate (4-HPP) as substrate. Both the adenylation (A) and the thioesterase (TE) domain of the invA6 enzyme are inactive. This Paxillus involutus (Naked brimcap) protein is Inactive atromentin synthetase invA6 (invA6).